The chain runs to 206 residues: Transmembrane 4 L6 family member 19 (206 aa).

Over 1–16 (MLSFSRVVNCSRTCSR) the chain is Cytoplasmic. A helical transmembrane segment spans residues 17–37 (FLGLSLGTASLCAAGANIALL). Over 38–54 (FPNWDVTYLMRGLIGKH) the chain is Extracellular. The chain crosses the membrane as a helical span at residues 55–75 (AMLGSGLWGGGLMVLLAATLI). At 76–89 (SMTGSFSKSAPCLQ) the chain is on the cytoplasmic side. A helical membrane pass occupies residues 90-110 (VLIALLSSGLALLGAVICFVT). Residues 111 to 171 (SGVALKDGPF…PSKAVVWHVA (61 aa)) lie on the Extracellular side of the membrane. Residue asparagine 129 is glycosylated (N-linked (GlcNAc...) asparagine). Residues 172–192 (FFSILLCISLLQLLLVAIHLV) form a helical membrane-spanning segment. The tract at residues 182–192 (LQLLLVAIHLV) is important for homodimerization. Residues 193–206 (NSILGLFCSFCEKH) are Cytoplasmic-facing.

It belongs to the L6 tetraspanin family. In terms of assembly, may form homodimers and homooligomers. Interacts with integrins ITGAV and ITGB3. Interacts with components of members of the V0 complex of vacuolar(H+)-ATPase (V-ATPase), including ATP6V0B and ATP6V0D2; this interaction inhibits V1-V0 complex assembly. As to expression, predominantly expressed in osteoclasts (at protein level). Also expressed in white adipose tissue, as well as in bone marrow-derived macrophages.

The protein localises to the lysosome membrane. The protein resides in the cytoplasm. It localises to the cytoskeleton. It is found in the cell projection. Its subcellular location is the filopodium. Negatively regulates vacuolar (H+)-ATPase (V-ATPase) activity by interacting with members of V-ATPase V0 complex and hence inhibiting V1-V0 assembly. Required for multinucleation during osteoclast differentiation. The protein is Transmembrane 4 L6 family member 19 (Tm4sf19) of Mus musculus (Mouse).